Reading from the N-terminus, the 229-residue chain is Enolase-phosphatase E1 (229 aa).

It belongs to the HAD-like hydrolase superfamily. MasA/MtnC family. In terms of assembly, monomer. Mg(2+) is required as a cofactor.

It carries out the reaction 5-methylsulfanyl-2,3-dioxopentyl phosphate + H2O = 1,2-dihydroxy-5-(methylsulfanyl)pent-1-en-3-one + phosphate. It functions in the pathway amino-acid biosynthesis; L-methionine biosynthesis via salvage pathway; L-methionine from S-methyl-5-thio-alpha-D-ribose 1-phosphate: step 3/6. It participates in amino-acid biosynthesis; L-methionine biosynthesis via salvage pathway; L-methionine from S-methyl-5-thio-alpha-D-ribose 1-phosphate: step 4/6. Bifunctional enzyme that catalyzes the enolization of 2,3-diketo-5-methylthiopentyl-1-phosphate (DK-MTP-1-P) into the intermediate 2-hydroxy-3-keto-5-methylthiopentenyl-1-phosphate (HK-MTPenyl-1-P), which is then dephosphorylated to form the acireductone 1,2-dihydroxy-3-keto-5-methylthiopentene (DHK-MTPene). The polypeptide is Enolase-phosphatase E1 (Serratia proteamaculans (strain 568)).